A 136-amino-acid polypeptide reads, in one-letter code: Protein NrdI (136 aa).

Belongs to the NrdI family.

Probably involved in ribonucleotide reductase function. The sequence is that of Protein NrdI from Salmonella dublin (strain CT_02021853).